The primary structure comprises 791 residues: MVATSSKRTLDPKEEHLPADKTSTNSSNTIISELATQEKSSSSGTTLKLIALNIKSISDEDVGYIQNVERLSLRKNHLTSLPASFKRLSRLQYLDLHNNNFKEIPYILTQCPQLEILDLSSNEIEALPDEISSFWQDNIRVLSLKDNNVTSIRNLKSITKLNKLSILDLEDNKIPKEELDQVQSYTPFHTGIPKEEYWAIAISRYLKDHPNLPTPEPKISRAAKRMGFINTNLSNGAMNENNIISLAPSANTTISASTAMVSSNQTSATSFSGTVNAESEQSGAVNGTELYNHTKYNDYFKRLSILPEESMSNGHQKISHAELVVSCRKLLFSFTECQQAIRKIASFCKEKAVAVNVVSLLYSVRSHTDNLVEVLQQTENEDESHDQALIKLCLTIITNFKQIITLLRKNFEIFFKEDDLCFIRMFYMTLMCAYMEMYNAWSFIKEDDQVSGSASKAPKKHSFSRHETSSSSITSGGGPAASTTSTHCSGNIKLLPKTRSTRTPSASALLSNSNILTGDTTAVPLLSPNLNGAHTHGPILGHQNAISNGSSQTNMNEVKTTSDTIPRQQLLQHNKSISDSKKESQAHEPKQHPVMTSSIINASNSNNVSNVNITPPPMNGGGAANSSANVVETNIDIQLYQTLSTVVKMVSVVYNQLTSEISKIAIASTMGKQILTDSLAPKIRDLTETCRQAMDLSKQLNERLNVLIPNDSNSEKYLTSLEKLKTWEIMNSFLKVIISILANTKIVMSDVPNLNELRPNLANLAKITKDVTVILDLSSYKAVSVSANSPE.

Positions 1-28 are disordered; sequence MVATSSKRTLDPKEEHLPADKTSTNSSN. Residues 8-19 show a composition bias toward basic and acidic residues; the sequence is RTLDPKEEHLPA. LRR repeat units follow at residues 43–64, 67–88, 90–111, 113–134, 138–159, and 163–183; these read SGTT…DVGY, NVER…FKRL, RLQY…LTQC, QLEI…ISSF, NIRV…KSIT, and KLSI…DQVQ. Thr-214 carries the phosphothreonine modification. Disordered regions lie at residues 454–506 and 534–569; these read ASKA…TPSA and HTHG…PRQQ. Residues 469–486 show a composition bias toward low complexity; sequence SSSSITSGGGPAASTTST. A compositionally biased stretch (polar residues) spans 544–569; it reads NAISNGSSQTNMNEVKTTSDTIPRQQ.

The protein resides in the cytoplasm. In terms of biological role, required for proper cell morphogenesis and cell separation after mitosis. Functions in the RAM (regulation of ACE2 activity and cellular morphogenesis) signaling network and is required for proper ACE2 localization and CBK1 kinase activity. The protein is Leucine-rich repeat-containing protein SOG2 of Saccharomyces cerevisiae (strain ATCC 204508 / S288c) (Baker's yeast).